A 160-amino-acid chain; its full sequence is MKKRTTQAKKSGQNTNIRDVFPHVVRSNSSQSHIGKKVSSEQSPTPDVTITTKTLDERIKEDDELSKEVEEAWNQIMAERISEPIHCENITKVEFILHHFDTTARYGPYLGMTRMQRWKRAKNFNLNPPETVGKILMLEEADEENRKRESLFYDLQTIPG.

Positions 1–48 (MKKRTTQAKKSGQNTNIRDVFPHVVRSNSSQSHIGKKVSSEQSPTPDV) are disordered. The span at 8-17 (AKKSGQNTNI) shows a compositional bias: polar residues.

This sequence belongs to the DNA polymerase delta subunit 4 family. As to quaternary structure, heterotetramer that consist of the pol3, cdc1, cdc27 and cdm1 subunits. Interacts with cdc1 and pol3.

It is found in the nucleus. In terms of biological role, appears to have a role in the stabilization of the DNA polymerase delta complex. This is DNA polymerase delta subunit 4 (cdm1) from Schizosaccharomyces pombe (strain 972 / ATCC 24843) (Fission yeast).